Here is a 208-residue protein sequence, read N- to C-terminus: FMN-dependent NADH:quinone oxidoreductase 2 (208 aa).

It belongs to the azoreductase type 1 family. In terms of assembly, homodimer. Requires FMN as cofactor.

It carries out the reaction 2 a quinone + NADH + H(+) = 2 a 1,4-benzosemiquinone + NAD(+). The enzyme catalyses N,N-dimethyl-1,4-phenylenediamine + anthranilate + 2 NAD(+) = 2-(4-dimethylaminophenyl)diazenylbenzoate + 2 NADH + 2 H(+). Functionally, quinone reductase that provides resistance to thiol-specific stress caused by electrophilic quinones. Also exhibits azoreductase activity. Catalyzes the reductive cleavage of the azo bond in aromatic azo compounds to the corresponding amines. The chain is FMN-dependent NADH:quinone oxidoreductase 2 from Bacillus cereus (strain ATCC 10987 / NRS 248).